A 449-amino-acid chain; its full sequence is Probable cysteine proteinase 224L (449 aa).

Residues Cys-99, His-292, and Asn-322 contribute to the active site. Residues 429-449 traverse the membrane as a helical segment; it reads DTQIVFIFFLSVVILFIFIIL.

This sequence belongs to the peptidase C1 family.

It localises to the membrane. Probable cysteine protease. The protein is Probable cysteine proteinase 224L of Acheta domesticus (House cricket).